Consider the following 585-residue polypeptide: Serine/threonine-protein kinase PknI (585 aa).

Over 1–349 (MALASGVTFA…ASPTRRRPRR (349 aa)) the chain is Cytoplasmic. The Protein kinase domain occupies 12 to 252 (YTVVRMLGCS…SCREFADAMN (241 aa)). Residues 18-26 (LGCSAMGEV) and Lys-41 contribute to the ATP site. ADP is bound by residues Lys-41, Asp-90, and Val-92. The Proton acceptor role is filled by Asp-137. The chain crosses the membrane as a helical span at residues 350–370 (ILVGAVAVLLLAGLFAVGIVI). Over 371–585 (GRKTNTTATE…PTTTAPGPGR (215 aa)) the chain is Extracellular. The disordered stretch occupies residues 546–585 (SGDLPPAVTVPDPATIPDTPDTTSTATLTPPTTTAPGPGR). Residues 554–585 (TVPDPATIPDTPDTTSTATLTPPTTTAPGPGR) are compositionally biased toward low complexity.

The protein belongs to the protein kinase superfamily. Ser/Thr protein kinase family. It depends on Mn(2+) as a cofactor. In terms of processing, autophosphorylated at serine and threonine residues.

It localises to the cytoplasm. The protein localises to the cell membrane. It carries out the reaction L-seryl-[protein] + ATP = O-phospho-L-seryl-[protein] + ADP + H(+). It catalyses the reaction L-threonyl-[protein] + ATP = O-phospho-L-threonyl-[protein] + ADP + H(+). Plays an important role in slowing down the growth of mycobacteria within the infected host. This is Serine/threonine-protein kinase PknI (pknI) from Mycobacterium bovis (strain ATCC BAA-935 / AF2122/97).